The following is a 101-amino-acid chain: Small ribosomal subunit protein uS14 (101 aa).

Belongs to the universal ribosomal protein uS14 family. In terms of assembly, part of the 30S ribosomal subunit. Contacts proteins S3 and S10.

Functionally, binds 16S rRNA, required for the assembly of 30S particles and may also be responsible for determining the conformation of the 16S rRNA at the A site. This chain is Small ribosomal subunit protein uS14, found in Buchnera aphidicola subsp. Schizaphis graminum (strain Sg).